A 908-amino-acid chain; its full sequence is Translation initiation factor IF-2 (908 aa).

Disordered stretches follow at residues 52–229 (QSHG…AEEA) and 241–316 (AGQY…SAQH). The span at 65–84 (KSKTTSTARVTGSSGKSKSV) shows a compositional bias: polar residues. 6 stretches are compositionally biased toward basic and acidic residues: residues 94–108 (FEKP…ELAA), 120–138 (AAKD…EERQ), 176–185 (IEVKPKEQPK), 193–229 (PKVE…AEEA), 270–280 (SFEKERREIKR), and 294–303 (KNQDEREIKN). The tr-type G domain occupies 409 to 578 (TRPPVVTIMG…SLQAELMELE (170 aa)). A G1 region spans residues 418-425 (GHVDHGKT). 418 to 425 (GHVDHGKT) lines the GTP pocket. The tract at residues 443 to 447 (GITQH) is G2. Residues 464–467 (DTPG) form a G3 region. GTP contacts are provided by residues 464–468 (DTPGH) and 518–521 (NKMD). The G4 stretch occupies residues 518–521 (NKMD). Residues 554–556 (SAK) are G5.

The protein belongs to the TRAFAC class translation factor GTPase superfamily. Classic translation factor GTPase family. IF-2 subfamily.

It is found in the cytoplasm. In terms of biological role, one of the essential components for the initiation of protein synthesis. Protects formylmethionyl-tRNA from spontaneous hydrolysis and promotes its binding to the 30S ribosomal subunits. Also involved in the hydrolysis of GTP during the formation of the 70S ribosomal complex. The sequence is that of Translation initiation factor IF-2 from Psychrobacter arcticus (strain DSM 17307 / VKM B-2377 / 273-4).